Here is a 426-residue protein sequence, read N- to C-terminus: 26S proteasome regulatory subunit 7B (426 aa).

209–216 serves as a coordination point for ATP; it reads GPPGTGKT.

The protein belongs to the AAA ATPase family.

The protein localises to the cytoplasm. It localises to the nucleus. The 26S proteasome is involved in the ATP-dependent degradation of ubiquitinated proteins. The regulatory (or ATPase) complex confers ATP dependency and substrate specificity to the 26S complex. This is 26S proteasome regulatory subunit 7B (RPT1B) from Oryza sativa subsp. japonica (Rice).